Here is a 354-residue protein sequence, read N- to C-terminus: MTELKNDRYLRALLRQPVDVTPVWMMRQAGRYLPEYKATRAQAGDFMSLCKNAELACEVTLQPLRRFPLDAAILFSDILTIPDAMGLGLYFETGEGPRFTSPIKSKADIDKLPIPDPEGELGYVMNAVRTIRRELKGEVPLIGFSGSPWTLATYMVEGGSSKAFTVIKKMMYAEPMALHALLDKLAKSVTLYLNAQIKAGAQSVMIFDTWGGVLTGRDYQQFSLYYMHKIIDGLLRENEGRRVPVTLFTKGGGQWLEAMAATGCDALGLDWTTDIADARRRVGDTVALQGNMDPSMLYAQPARIEEEVASILAGFGQGEGHVFNLGHGIHQDVPPEHAGAFVEAVHRHSAQYHL.

Residues 27–31 (RQAGR), Asp-77, Tyr-154, Thr-209, and His-327 contribute to the substrate site.

The protein belongs to the uroporphyrinogen decarboxylase family. As to quaternary structure, homodimer.

It localises to the cytoplasm. The enzyme catalyses uroporphyrinogen III + 4 H(+) = coproporphyrinogen III + 4 CO2. It participates in porphyrin-containing compound metabolism; protoporphyrin-IX biosynthesis; coproporphyrinogen-III from 5-aminolevulinate: step 4/4. Catalyzes the decarboxylation of four acetate groups of uroporphyrinogen-III to yield coproporphyrinogen-III. This chain is Uroporphyrinogen decarboxylase, found in Enterobacter sp. (strain 638).